The following is a 354-amino-acid chain: Biotin synthase (354 aa).

The 219-residue stretch at 64-282 folds into the Radical SAM core domain; the sequence is GDVELATLLS…IAVARITMPR (219 aa). Cys-79, Cys-83, and Cys-86 together coordinate [4Fe-4S] cluster. Residues Cys-123, Cys-154, Cys-214, and Arg-286 each contribute to the [2Fe-2S] cluster site.

The protein belongs to the radical SAM superfamily. Biotin synthase family. In terms of assembly, homodimer. [4Fe-4S] cluster serves as cofactor. [2Fe-2S] cluster is required as a cofactor.

The catalysed reaction is (4R,5S)-dethiobiotin + (sulfur carrier)-SH + 2 reduced [2Fe-2S]-[ferredoxin] + 2 S-adenosyl-L-methionine = (sulfur carrier)-H + biotin + 2 5'-deoxyadenosine + 2 L-methionine + 2 oxidized [2Fe-2S]-[ferredoxin]. It participates in cofactor biosynthesis; biotin biosynthesis; biotin from 7,8-diaminononanoate: step 2/2. In terms of biological role, catalyzes the conversion of dethiobiotin (DTB) to biotin by the insertion of a sulfur atom into dethiobiotin via a radical-based mechanism. This Paracidovorax citrulli (strain AAC00-1) (Acidovorax citrulli) protein is Biotin synthase.